A 123-amino-acid polypeptide reads, in one-letter code: uncharacterized protein (123 aa).

A signal peptide spans 1–25 (MKHGIKALLITLSLACAGMSHSALA). A compositionally biased stretch (low complexity) spans 40–53 (EAPAAQSKAAVPAK). The tract at residues 40–62 (EAPAAQSKAAVPAKASDEEGTRV) is disordered. HhH domains follow at residues 60–90 (TRVS…IVSY) and 91–120 (REEY…NLAV).

This is an uncharacterized protein from Escherichia coli (strain K12).